Here is a 167-residue protein sequence, read N- to C-terminus: CASP-like protein UU1 (167 aa).

Over 1–17 the chain is Cytoplasmic; it reads MVELESQEAVTVASTAD. Residues 18–38 traverse the membrane as a helical segment; that stretch reads IAVDVSLRLLAAATSLASAVV. Residues 39–54 are Extracellular-facing; the sequence is VAANHQQRWGVRVDFT. A helical transmembrane segment spans residues 55–75; sequence LFQVWIGFVAVNLVCTVYAAA. Topologically, residues 76–94 are cytoplasmic; it reads TAAAARKAMGRWWLHHADA. The chain crosses the membrane as a helical span at residues 95-115; that stretch reads VVVNLEAAATAGAGAIGSIAM. Residues 116–135 lie on the Extracellular side of the membrane; that stretch reads WGNEASGWYAVCRLYRRYCN. The chain crosses the membrane as a helical span at residues 136-156; sequence AGAAALALSLAAVLLLGVACA. Over 157 to 167 the chain is Cytoplasmic; sequence RSRYPKMPPTT.

Belongs to the Casparian strip membrane proteins (CASP) family. In terms of assembly, homodimer and heterodimers.

Its subcellular location is the cell membrane. In Oryza sativa subsp. indica (Rice), this protein is CASP-like protein UU1.